Here is a 272-residue protein sequence, read N- to C-terminus: Putative pyruvate, phosphate dikinase regulatory protein (272 aa).

153-160 (GVSRTSKT) contributes to the ADP binding site.

This sequence belongs to the pyruvate, phosphate/water dikinase regulatory protein family. PDRP subfamily.

It catalyses the reaction N(tele)-phospho-L-histidyl/L-threonyl-[pyruvate, phosphate dikinase] + ADP = N(tele)-phospho-L-histidyl/O-phospho-L-threonyl-[pyruvate, phosphate dikinase] + AMP + H(+). It carries out the reaction N(tele)-phospho-L-histidyl/O-phospho-L-threonyl-[pyruvate, phosphate dikinase] + phosphate + H(+) = N(tele)-phospho-L-histidyl/L-threonyl-[pyruvate, phosphate dikinase] + diphosphate. In terms of biological role, bifunctional serine/threonine kinase and phosphorylase involved in the regulation of the pyruvate, phosphate dikinase (PPDK) by catalyzing its phosphorylation/dephosphorylation. The sequence is that of Putative pyruvate, phosphate dikinase regulatory protein from Chelativorans sp. (strain BNC1).